Consider the following 2380-residue polypeptide: DNA polymerase epsilon catalytic subunit A (2380 aa).

Residues 169-196 (YYNKGNNNNNNHQNYNNNNNQNNNNFNK) show a composition bias toward low complexity. Disordered regions lie at residues 169 to 209 (YYNK…NNSK), 1178 to 1210 (FFEK…QQTD), 1766 to 1787 (KNTS…NDTT), 1967 to 1998 (QQQQ…KNKK), and 2059 to 2120 (KIST…TTTS). The segment covering 1183–1201 (EDNDQDNDNDNDNDNDNDN) has biased composition (acidic residues). Low complexity predominate over residues 1767 to 1776 (NTSNNSNTKN). Residues 1777–1787 (GANQNTTNDTT) are compositionally biased toward polar residues. Residues 1975-1991 (NADDDDDDDVSENEEEQ) are compositionally biased toward acidic residues. 2 stretches are compositionally biased toward low complexity: residues 2059 to 2081 (KIST…TTKD) and 2110 to 2120 (SSSSSTTTTTS). C2225 and C2228 together coordinate Zn(2+). The CysA-type zinc-finger motif lies at 2225-2288 (CSSCHSCRDI…RVPELSCIQC (64 aa)). Residues 2245–2258 (ISSRLSSQQKSNNN) show a composition bias toward low complexity. Residues 2245 to 2275 (ISSRLSSQQKSNNNDSDDSDDDNEENEGDDD) form a disordered region. Residues 2259–2275 (DSDDSDDDNEENEGDDD) show a composition bias toward acidic residues. Positions 2285 and 2288 each coordinate Zn(2+). [4Fe-4S] cluster-binding residues include C2319, C2322, C2334, and C2337. Positions 2319–2337 (CSKCNDVKSDNLGDICPQC) match the CysB motif motif.

Belongs to the DNA polymerase type-B family. Consists of three subunits: pole, pole2 and pole3. [4Fe-4S] cluster is required as a cofactor.

The protein resides in the nucleus. The enzyme catalyses DNA(n) + a 2'-deoxyribonucleoside 5'-triphosphate = DNA(n+1) + diphosphate. In terms of biological role, DNA polymerase II participates in chromosomal DNA replication. This Dictyostelium discoideum (Social amoeba) protein is DNA polymerase epsilon catalytic subunit A (pole).